Reading from the N-terminus, the 198-residue chain is Adenine phosphoribosyltransferase (198 aa).

It belongs to the purine/pyrimidine phosphoribosyltransferase family. As to quaternary structure, homodimer.

It is found in the cytoplasm. It catalyses the reaction AMP + diphosphate = 5-phospho-alpha-D-ribose 1-diphosphate + adenine. The protein operates within purine metabolism; AMP biosynthesis via salvage pathway; AMP from adenine: step 1/1. In terms of biological role, catalyzes a salvage reaction resulting in the formation of AMP, that is energically less costly than de novo synthesis. The chain is Adenine phosphoribosyltransferase from Serratia proteamaculans (strain 568).